We begin with the raw amino-acid sequence, 131 residues long: Large ribosomal subunit protein bL17 (131 aa).

The protein belongs to the bacterial ribosomal protein bL17 family. Part of the 50S ribosomal subunit. Contacts protein L32.

The chain is Large ribosomal subunit protein bL17 from Methylibium petroleiphilum (strain ATCC BAA-1232 / LMG 22953 / PM1).